A 335-amino-acid chain; its full sequence is HTH-type transcriptional regulator MalR (335 aa).

The region spanning 1–55 (MNIKDIARLSGVGVSTVSRVINNHPDVKQSTREKVLQIIKDSNYIPNNSARILKQ) is the HTH lacI-type domain. A DNA-binding region (H-T-H motif) is located at residues 3 to 22 (IKDIARLSGVGVSTVSRVIN).

Functionally, repressor of glucanotransferase gene expression. This chain is HTH-type transcriptional regulator MalR, found in Clostridium butyricum.